A 602-amino-acid polypeptide reads, in one-letter code: Elongation factor 4 (602 aa).

The tr-type G domain occupies 2–184 (NHIRNFSIIA…LIVAKVPAPR (183 aa)). Residues 14 to 19 (DHGKST) and 131 to 134 (NKMD) each bind GTP.

It belongs to the TRAFAC class translation factor GTPase superfamily. Classic translation factor GTPase family. LepA subfamily.

The protein resides in the cell inner membrane. The catalysed reaction is GTP + H2O = GDP + phosphate + H(+). In terms of biological role, required for accurate and efficient protein synthesis under certain stress conditions. May act as a fidelity factor of the translation reaction, by catalyzing a one-codon backward translocation of tRNAs on improperly translocated ribosomes. Back-translocation proceeds from a post-translocation (POST) complex to a pre-translocation (PRE) complex, thus giving elongation factor G a second chance to translocate the tRNAs correctly. Binds to ribosomes in a GTP-dependent manner. This chain is Elongation factor 4, found in Paracidovorax citrulli (strain AAC00-1) (Acidovorax citrulli).